A 190-amino-acid chain; its full sequence is Xanthine phosphoribosyltransferase (190 aa).

Leu20 and Asn27 together coordinate xanthine. 128–132 (ANGKA) serves as a coordination point for 5-phospho-alpha-D-ribose 1-diphosphate. Lys156 is a binding site for xanthine.

Belongs to the purine/pyrimidine phosphoribosyltransferase family. Xpt subfamily. In terms of assembly, homodimer.

It localises to the cytoplasm. The enzyme catalyses XMP + diphosphate = xanthine + 5-phospho-alpha-D-ribose 1-diphosphate. It participates in purine metabolism; XMP biosynthesis via salvage pathway; XMP from xanthine: step 1/1. In terms of biological role, converts the preformed base xanthine, a product of nucleic acid breakdown, to xanthosine 5'-monophosphate (XMP), so it can be reused for RNA or DNA synthesis. The protein is Xanthine phosphoribosyltransferase of Finegoldia magna (strain ATCC 29328 / DSM 20472 / WAL 2508) (Peptostreptococcus magnus).